Consider the following 379-residue polypeptide: Cobalt-precorrin-5B C(1)-methyltransferase (379 aa).

The protein belongs to the CbiD family.

The catalysed reaction is Co-precorrin-5B + S-adenosyl-L-methionine = Co-precorrin-6A + S-adenosyl-L-homocysteine. Its pathway is cofactor biosynthesis; adenosylcobalamin biosynthesis; cob(II)yrinate a,c-diamide from sirohydrochlorin (anaerobic route): step 6/10. Catalyzes the methylation of C-1 in cobalt-precorrin-5B to form cobalt-precorrin-6A. The sequence is that of Cobalt-precorrin-5B C(1)-methyltransferase from Edwardsiella ictaluri (strain 93-146).